Here is a 222-residue protein sequence, read N- to C-terminus: Ribulose-phosphate 3-epimerase (222 aa).

Residue S7 coordinates substrate. H32, D34, and H65 together coordinate a divalent metal cation. Catalysis depends on D34, which acts as the Proton acceptor. Substrate is bound by residues H65, 141 to 144 (GFSG), 174 to 176 (DGG), and 196 to 197 (GS). An a divalent metal cation-binding site is contributed by D174. D174 serves as the catalytic Proton donor.

This sequence belongs to the ribulose-phosphate 3-epimerase family. It depends on a divalent metal cation as a cofactor.

It carries out the reaction D-ribulose 5-phosphate = D-xylulose 5-phosphate. Its pathway is carbohydrate degradation. In terms of biological role, catalyzes the reversible epimerization of D-ribulose 5-phosphate to D-xylulose 5-phosphate. The protein is Ribulose-phosphate 3-epimerase of Aquifex aeolicus (strain VF5).